The chain runs to 126 residues: Large ribosomal subunit protein bL12 (126 aa).

Belongs to the bacterial ribosomal protein bL12 family. As to quaternary structure, homodimer. Part of the ribosomal stalk of the 50S ribosomal subunit. Forms a multimeric L10(L12)X complex, where L10 forms an elongated spine to which 2 to 4 L12 dimers bind in a sequential fashion. Binds GTP-bound translation factors.

Its function is as follows. Forms part of the ribosomal stalk which helps the ribosome interact with GTP-bound translation factors. Is thus essential for accurate translation. The polypeptide is Large ribosomal subunit protein bL12 (Rhizobium meliloti (strain 1021) (Ensifer meliloti)).